The primary structure comprises 374 residues: 4-hydroxy-3-methylbut-2-en-1-yl diphosphate synthase (flavodoxin) (374 aa).

Residues Cys270, Cys273, Cys305, and Glu312 each coordinate [4Fe-4S] cluster.

Belongs to the IspG family. The cofactor is [4Fe-4S] cluster.

The enzyme catalyses (2E)-4-hydroxy-3-methylbut-2-enyl diphosphate + oxidized [flavodoxin] + H2O + 2 H(+) = 2-C-methyl-D-erythritol 2,4-cyclic diphosphate + reduced [flavodoxin]. It functions in the pathway isoprenoid biosynthesis; isopentenyl diphosphate biosynthesis via DXP pathway; isopentenyl diphosphate from 1-deoxy-D-xylulose 5-phosphate: step 5/6. Functionally, converts 2C-methyl-D-erythritol 2,4-cyclodiphosphate (ME-2,4cPP) into 1-hydroxy-2-methyl-2-(E)-butenyl 4-diphosphate. This Vibrio cholerae serotype O1 (strain ATCC 39315 / El Tor Inaba N16961) protein is 4-hydroxy-3-methylbut-2-en-1-yl diphosphate synthase (flavodoxin).